The following is an 824-amino-acid chain: Dapper 1-B (824 aa).

3 disordered regions span residues 1–33, 131–150, and 515–534; these read MKPI…RQRT, EEHL…LSDG, and HASS…EGSS. Positions 2-343 are interaction with tcf7l1-A; it reads KPIPAAPEPL…PVRTNKPRTS (342 aa). Positions 16–33 are enriched in basic and acidic residues; it reads DSPRRKDKGEAESERQRT. The stretch at 84-139 forms a coiled coil; sequence EEKFLEDNILLLKKQLNCLRKRDAGLLSQLHELDKQINDLRIDVEKTEEHLETDSR. A compositionally biased stretch (basic and acidic residues) spans 520 to 530; the sequence is FDERPPLDFKS. The PDZ-binding motif lies at 821 to 824; the sequence is MTTV.

This sequence belongs to the dapper family. Interacts with dbf4 and tcf7l1-A. Interacts with dvl2/dsh; the interaction is required for dact1-b phosphorylation by CaMK1D and seems to become disrupted by the phosphorylation. In terms of processing, phosphorylated by CaMK1D; the phosphorylation requires binding to dvl2/dsh. Expressed both in the dorsal lip in early gastrula and throughout the posterior presumptive ectoderm in early neurula. Expressed in the dorsal neural folds at the tailbud stage and highly expressed in the tadpole head, including the brain, retina and cartilaginous branchial arch derivatives.

The protein localises to the cytoplasm. The protein resides in the nucleus. Involved in regulation of intracellular signaling pathways during development. Specifically thought to play a role in canonical and/or non-canonical Wnt signaling pathways through interaction with DSH (Dishevelled) family proteins. Binds to dvl2 to regulate the degradation of beta-catenin (ctnnb1-A and possibly ctnnb1-B), thereby modulating the transcriptional activation of target genes of the Wnt signaling pathway. Seems to promote beta-catenin degradation if not phosphorylated and to block beta-catenin degradation if phosphorylated by CaMK1D. Involved in regulation of catenin delta/ctnnd1 protein level. May also bind to and directly stimulate the activity of tcf7l1-A. Also regulates the activation by dvl2 of jnk, a component of ctnnb1/beta-catenin-independent frizzled signaling. Required for notochord and head formation. The sequence is that of Dapper 1-B (dact1-b) from Xenopus laevis (African clawed frog).